Reading from the N-terminus, the 75-residue chain is Small ribosomal subunit protein bS18 (75 aa).

Belongs to the bacterial ribosomal protein bS18 family. As to quaternary structure, part of the 30S ribosomal subunit. Forms a tight heterodimer with protein bS6.

In terms of biological role, binds as a heterodimer with protein bS6 to the central domain of the 16S rRNA, where it helps stabilize the platform of the 30S subunit. The chain is Small ribosomal subunit protein bS18 from Paracoccus denitrificans (strain Pd 1222).